A 370-amino-acid polypeptide reads, in one-letter code: Type II restriction enzyme MjaII (370 aa).

Belongs to the TdeIII type II restriction endonuclease family.

The enzyme catalyses Endonucleolytic cleavage of DNA to give specific double-stranded fragments with terminal 5'-phosphates.. Functionally, a P subtype restriction enzyme that recognizes the double-stranded sequence 5'-GGNCC-3'; the cleavage site is unknown. The chain is Type II restriction enzyme MjaII (mjaIIR) from Methanocaldococcus jannaschii (strain ATCC 43067 / DSM 2661 / JAL-1 / JCM 10045 / NBRC 100440) (Methanococcus jannaschii).